The chain runs to 175 residues: Large ribosomal subunit protein uL18 (175 aa).

Belongs to the universal ribosomal protein uL18 family. Part of the 50S ribosomal subunit. Contacts the 5S and 23S rRNAs.

This is one of the proteins that bind and probably mediate the attachment of the 5S RNA into the large ribosomal subunit, where it forms part of the central protuberance. In Methanospirillum hungatei JF-1 (strain ATCC 27890 / DSM 864 / NBRC 100397 / JF-1), this protein is Large ribosomal subunit protein uL18.